Consider the following 115-residue polypeptide: Large ribosomal subunit protein bL19 (115 aa).

The protein belongs to the bacterial ribosomal protein bL19 family.

This protein is located at the 30S-50S ribosomal subunit interface and may play a role in the structure and function of the aminoacyl-tRNA binding site. The sequence is that of Large ribosomal subunit protein bL19 from Streptococcus equi subsp. zooepidemicus (strain H70).